The following is a 506-amino-acid chain: CTL-like protein DDB_G0269978 (506 aa).

N-linked (GlcNAc...) asparagine glycans are attached at residues N15 and N41. Helical transmembrane passes span 91-111 (LLYS…TVIA), 126-146 (LQGL…FLIW), 161-181 (SFFS…GNGW), 182-202 (YSWA…YFAF), 226-246 (TLLV…IWLF), 256-276 (SYWT…LYWT), 279-299 (VITY…YFFA), 323-343 (FGSI…QFIC), 345-367 (GFAR…ALIF), 371-393 (LYTF…CNSS), 416-436 (ITML…VTMI), and 447-467 (WLYV…DIIF).

The protein belongs to the CTL (choline transporter-like) family.

The protein resides in the membrane. The polypeptide is CTL-like protein DDB_G0269978 (Dictyostelium discoideum (Social amoeba)).